The following is a 179-amino-acid chain: MKAGPLQLGVVPPANRAIAILDFFLRPIAIVGTLASAIAMATTNQTLPFFSQFIRFRAKFNDLPSFTFFVVASSIVSAYLILSLGFSILHIAKSNLVNSRVLLLLLDTAAMGLLMAGSAAATAIVQLAHKGNNKVNWFAICQQYNSFCKRVSGSLIGSYAGVVVLILLILLSGVALSRR.

The Cytoplasmic segment spans residues 1–17 (MKAGPLQLGVVPPANRA). The chain crosses the membrane as a helical span at residues 18–38 (IAILDFFLRPIAIVGTLASAI). The Extracellular portion of the chain corresponds to 39 to 67 (AMATTNQTLPFFSQFIRFRAKFNDLPSFT). N44 carries an N-linked (GlcNAc...) asparagine glycan. Residues 68-88 (FFVVASSIVSAYLILSLGFSI) traverse the membrane as a helical segment. At 89–100 (LHIAKSNLVNSR) the chain is on the cytoplasmic side. A helical membrane pass occupies residues 101–121 (VLLLLLDTAAMGLLMAGSAAA). Residues 122–154 (TAIVQLAHKGNNKVNWFAICQQYNSFCKRVSGS) are Extracellular-facing. A helical membrane pass occupies residues 155-175 (LIGSYAGVVVLILLILLSGVA). The Cytoplasmic segment spans residues 176–179 (LSRR).

The protein belongs to the Casparian strip membrane proteins (CASP) family. In terms of assembly, homodimer and heterodimers.

It localises to the cell membrane. Functionally, regulates membrane-cell wall junctions and localized cell wall deposition. Required for establishment of the Casparian strip membrane domain (CSD) and the subsequent formation of Casparian strips, a cell wall modification of the root endodermis that determines an apoplastic barrier between the intraorganismal apoplasm and the extraorganismal apoplasm and prevents lateral diffusion. The protein is Casparian strip membrane protein 1 of Lactuca sativa (Garden lettuce).